The following is a 201-amino-acid chain: 3-isopropylmalate dehydratase small subunit (201 aa).

Belongs to the LeuD family. LeuD type 1 subfamily. In terms of assembly, heterodimer of LeuC and LeuD.

The enzyme catalyses (2R,3S)-3-isopropylmalate = (2S)-2-isopropylmalate. The protein operates within amino-acid biosynthesis; L-leucine biosynthesis; L-leucine from 3-methyl-2-oxobutanoate: step 2/4. Functionally, catalyzes the isomerization between 2-isopropylmalate and 3-isopropylmalate, via the formation of 2-isopropylmaleate. This is 3-isopropylmalate dehydratase small subunit from Rhodopseudomonas palustris (strain BisA53).